Consider the following 190-residue polypeptide: Threonylcarbamoyl-AMP synthase (190 aa).

In terms of domain architecture, YrdC-like spans 7–190; that stretch reads GDAIAAAIDV…ALTGELFRQG (184 aa).

This sequence belongs to the SUA5 family. TsaC subfamily.

Its subcellular location is the cytoplasm. The catalysed reaction is L-threonine + hydrogencarbonate + ATP = L-threonylcarbamoyladenylate + diphosphate + H2O. Required for the formation of a threonylcarbamoyl group on adenosine at position 37 (t(6)A37) in tRNAs that read codons beginning with adenine. Catalyzes the conversion of L-threonine, HCO(3)(-)/CO(2) and ATP to give threonylcarbamoyl-AMP (TC-AMP) as the acyladenylate intermediate, with the release of diphosphate. The sequence is that of Threonylcarbamoyl-AMP synthase from Shigella dysenteriae serotype 1 (strain Sd197).